The sequence spans 265 residues: MGQKTNPNGLRLGIIRTWESKRYADQKDVPALIKEDALIREFLNENFSKAGVSQIEIERVKAKSKERVTIKLYVSKPGIALGKEASVKNKAVSNLEYLTKKEVILNIIEVRRPEKVAVLVAQSIAEQLENRASFRRAQKMAIQRALKSGAKGIRTLVSGRLGGAEMARSEGYSEGRVPLHTLRADVDYATAEASTTYGILGIKVWIYHGEVLPGQSILDTRKPFEAGNQRRGQKRRPRNDQPVKDLNKEKEIARRTNYYVNAKKN.

In terms of domain architecture, KH type-2 spans 39–111 (IREFLNENFS…EVILNIIEVR (73 aa)). A disordered region spans residues 224-250 (FEAGNQRRGQKRRPRNDQPVKDLNKEK). A compositionally biased stretch (basic and acidic residues) spans 238-250 (RNDQPVKDLNKEK).

It belongs to the universal ribosomal protein uS3 family. Part of the 30S ribosomal subunit. Forms a tight complex with proteins S10 and S14.

Functionally, binds the lower part of the 30S subunit head. Binds mRNA in the 70S ribosome, positioning it for translation. The protein is Small ribosomal subunit protein uS3 of Acholeplasma laidlawii.